Consider the following 485-residue polypeptide: Polyol:NADP oxidoreductase (485 aa).

Belongs to the mannitol dehydrogenase family.

The protein localises to the cytoplasm. In Gluconobacter oxydans (strain 621H) (Gluconobacter suboxydans), this protein is Polyol:NADP oxidoreductase (por).